The sequence spans 246 residues: Orotidine 5'-phosphate decarboxylase (246 aa).

Substrate is bound by residues D22, K44, 71–80 (DLKFHDIPNT), T131, R192, Q201, G221, and R222. The active-site Proton donor is the K73.

Belongs to the OMP decarboxylase family. Type 1 subfamily. Homodimer.

The catalysed reaction is orotidine 5'-phosphate + H(+) = UMP + CO2. It participates in pyrimidine metabolism; UMP biosynthesis via de novo pathway; UMP from orotate: step 2/2. Catalyzes the decarboxylation of orotidine 5'-monophosphate (OMP) to uridine 5'-monophosphate (UMP). The chain is Orotidine 5'-phosphate decarboxylase from Enterobacter sp. (strain 638).